A 24-amino-acid polypeptide reads, in one-letter code: Large ribosomal subunit protein uL10 (24 aa).

This sequence belongs to the universal ribosomal protein uL10 family. As to quaternary structure, part of the ribosomal stalk of the 50S ribosomal subunit. The N-terminus interacts with L11 and the large rRNA to form the base of the stalk. The C-terminus forms an elongated spine to which L12 dimers bind in a sequential fashion forming a multimeric L10(L12)X complex.

Its function is as follows. Forms part of the ribosomal stalk, playing a central role in the interaction of the ribosome with GTP-bound translation factors. The polypeptide is Large ribosomal subunit protein uL10 (rplJ) (Enterobacter cloacae).